The chain runs to 412 residues: CinA-like protein (412 aa).

This sequence belongs to the CinA family.

The chain is CinA-like protein from Syntrophotalea carbinolica (strain DSM 2380 / NBRC 103641 / GraBd1) (Pelobacter carbinolicus).